Reading from the N-terminus, the 306-residue chain is Aspartate carbamoyltransferase catalytic subunit (306 aa).

Arg53 and Thr54 together coordinate carbamoyl phosphate. An L-aspartate-binding site is contributed by Lys82. Residues Arg103, His131, and Gln134 each contribute to the carbamoyl phosphate site. 2 residues coordinate L-aspartate: Arg164 and Arg226. Leu263 and Pro264 together coordinate carbamoyl phosphate.

Belongs to the aspartate/ornithine carbamoyltransferase superfamily. ATCase family. As to quaternary structure, heterododecamer (2C3:3R2) of six catalytic PyrB chains organized as two trimers (C3), and six regulatory PyrI chains organized as three dimers (R2).

It catalyses the reaction carbamoyl phosphate + L-aspartate = N-carbamoyl-L-aspartate + phosphate + H(+). The protein operates within pyrimidine metabolism; UMP biosynthesis via de novo pathway; (S)-dihydroorotate from bicarbonate: step 2/3. In terms of biological role, catalyzes the condensation of carbamoyl phosphate and aspartate to form carbamoyl aspartate and inorganic phosphate, the committed step in the de novo pyrimidine nucleotide biosynthesis pathway. The sequence is that of Aspartate carbamoyltransferase catalytic subunit from Methanocaldococcus jannaschii (strain ATCC 43067 / DSM 2661 / JAL-1 / JCM 10045 / NBRC 100440) (Methanococcus jannaschii).